We begin with the raw amino-acid sequence, 137 residues long: MEAVLTKLDQEEKRALQDFHRCAWEETKNVINDFLEIPEERCTYKFNPYTKKMELLFTPEFHTAWQEVPECREFILNFLRLISGHRVVLKGPTIVFTKEIKNLGIPSTINVDFQANIENMDDLQKGNLIGKMNIKES.

This sequence belongs to the asfivirus A137R family. In terms of assembly, interacts with host TBK1.

The protein resides in the virion. Its subcellular location is the host cytoplasm. Its function is as follows. Plays a role in the inhibition of the host innate immune response. Mechanistically, promotes the autophagy-mediated lysosomal degradation of host TBK1 and affects IRF3 nuclear translocation to block type I IFN production. This Ornithodoros (relapsing fever ticks) protein is Structural protein A137R.